We begin with the raw amino-acid sequence, 201 residues long: FMN-dependent NADH:quinone oxidoreductase (201 aa).

FMN-binding positions include Ser-10, 16–18, 96–99, and 140–143; these read SQS, MYNF, and SRGG.

It belongs to the azoreductase type 1 family. In terms of assembly, homodimer. It depends on FMN as a cofactor.

The enzyme catalyses 2 a quinone + NADH + H(+) = 2 a 1,4-benzosemiquinone + NAD(+). It catalyses the reaction N,N-dimethyl-1,4-phenylenediamine + anthranilate + 2 NAD(+) = 2-(4-dimethylaminophenyl)diazenylbenzoate + 2 NADH + 2 H(+). Functionally, quinone reductase that provides resistance to thiol-specific stress caused by electrophilic quinones. In terms of biological role, also exhibits azoreductase activity. Catalyzes the reductive cleavage of the azo bond in aromatic azo compounds to the corresponding amines. The polypeptide is FMN-dependent NADH:quinone oxidoreductase (Salmonella paratyphi A (strain ATCC 9150 / SARB42)).